An 835-amino-acid chain; its full sequence is Protein translocase subunit SecA 1 (835 aa).

ATP contacts are provided by residues glutamine 85, 103–107 (GEGKT), and aspartate 492. The tract at residues 788–807 (VQGEAVHPSSDGEEAKKKPV) is disordered. Positions 819, 821, 830, and 831 each coordinate Zn(2+).

The protein belongs to the SecA family. In terms of assembly, monomer and homodimer. Part of the essential Sec protein translocation apparatus which comprises SecA, SecYEG and auxiliary proteins SecDF. Other proteins may also be involved. It depends on Zn(2+) as a cofactor.

It localises to the cell membrane. The protein localises to the cytoplasm. It carries out the reaction ATP + H2O + cellular proteinSide 1 = ADP + phosphate + cellular proteinSide 2.. Part of the Sec protein translocase complex. Interacts with the SecYEG preprotein conducting channel. Has a central role in coupling the hydrolysis of ATP to the transfer of proteins into and across the cell membrane, serving as an ATP-driven molecular motor driving the stepwise translocation of polypeptide chains across the membrane. This is Protein translocase subunit SecA 1 from Bacillus anthracis.